A 187-amino-acid polypeptide reads, in one-letter code: MVRYSAAPALETKCAKARGAYLRTHFKNSREVAFTINGMNLKKAFIFLDNVKEHKQAVPFRRFNGGVGRTAQGKEFGVTQARWPVKSVNFFYDLLKNAEANAEAKGLDMDKLIIKHVQVNAAPKQRRRTYRAHGRVTAYLSSPSHIEIIVAEEEEAVPKANDTVSRVSLKQGAKARNLAARKAITSA.

This sequence belongs to the universal ribosomal protein uL22 family. As to quaternary structure, component of the large ribosomal subunit (LSU). Mature yeast ribosomes consist of a small (40S) and a large (60S) subunit. The 40S small subunit contains 1 molecule of ribosomal RNA (18S rRNA) and at least 33 different proteins. The large 60S subunit contains 3 rRNA molecules (25S, 5.8S and 5S rRNA) and at least 46 different proteins. uL22 is associated with the polypeptide exit tunnel.

The protein resides in the cytoplasm. Its function is as follows. Component of the ribosome, a large ribonucleoprotein complex responsible for the synthesis of proteins in the cell. The small ribosomal subunit (SSU) binds messenger RNAs (mRNAs) and translates the encoded message by selecting cognate aminoacyl-transfer RNA (tRNA) molecules. The large subunit (LSU) contains the ribosomal catalytic site termed the peptidyl transferase center (PTC), which catalyzes the formation of peptide bonds, thereby polymerizing the amino acids delivered by tRNAs into a polypeptide chain. The nascent polypeptides leave the ribosome through a tunnel in the LSU and interact with protein factors that function in enzymatic processing, targeting, and the membrane insertion of nascent chains at the exit of the ribosomal tunnel. The protein is Large ribosomal subunit protein uL22B (rpl1702) of Schizosaccharomyces pombe (strain 972 / ATCC 24843) (Fission yeast).